The primary structure comprises 918 residues: Cell cycle and apoptosis regulator protein 2 (918 aa).

The tract at residues 1–35 is disordered; the sequence is MSQFKRQRINPLPGGRNFSGTASTSLLGPPPGLLT. Threonine 35 carries the post-translational modification Phosphothreonine. Residue lysine 112 is modified to N6-acetyllysine; by KAT8. Lysine 123 is modified (N6-methyllysine). Serine 124 is modified (phosphoserine). Disordered stretches follow at residues 179–219, 446–510, and 568–637; these read NRFP…KPRH, KAAE…PAVI, and VSPP…ASED. Omega-N-methylarginine is present on arginine 180. Residue lysine 215 is modified to N6-acetyllysine; by KAT8. 2 stretches are compositionally biased toward low complexity: residues 447–468 and 482–492; these read AAEA…EQAP and AETPEATTQQE. Residue threonine 454 is modified to Phosphothreonine; by ATM, ATR and CK2. Threonine 484 is modified (phosphothreonine). Position 569 is a phosphoserine (serine 569). Over residues 572 to 597 the composition is skewed to basic and acidic residues; the sequence is EPEKEEAAKEEEAIKEEVVKEPKDEA. Lysine 586 is covalently cross-linked (Glycyl lysine isopeptide (Lys-Gly) (interchain with G-Cter in SUMO2 and SUMO3); alternate). Lysine 586 is covalently cross-linked (Glycyl lysine isopeptide (Lys-Gly) (interchain with G-Cter in SUMO2); alternate). The tract at residues 605 to 665 is interaction with MCC; sequence ESEAPLKEDG…EEFAGAKLED (61 aa). Residues serine 622, serine 670, serine 673, serine 676, serine 682, and serine 803 each carry the phosphoserine modification. The segment at 699–918 is interaction with NR1D1; sequence DCLLAFVFFD…VEKEEPAPSN (220 aa). Residues 824 to 904 are a coiled coil; the sequence is LENRIHTLEL…QLEIQRVVEK (81 aa). Residue threonine 892 is modified to Phosphothreonine.

In terms of assembly, component of the DBIRD complex. Interacts with ZNF326/ZIRD; the interaction is direct. Interacts (via N-terminus) with SIRT1, which inhibits the deacetylation of substrates. Interacts (via N-terminus) with SUV39H1; this interaction abolishes the interaction with SIRT1. Component of a nuclear receptor-mediated transcription complex composed of at least ZNF335, CCAR2 and EMSY; the complex stimulates the transcription of nuclear receptor target genes such as SOX9 and HOXA1. Within the complex interacts with EMSY and interacts with ZNF335 (via C-terminus). Components of this complex may associate with components of a histone methylation complex to form a complex at least composed of ZNF335, HCFC1, CCAR2, EMSY, MKI67, RBBP5, ASH2L and WDR5. Within this complex, interacts with ASH2L. Interacts with NR1D1. Interacts (via N-terminus) with ESR1 and ESR2. Interacts (via N-terminus) with HDAC3 (via C-terminus). Interacts with HDAC1 and MED2F. Interacts with MCC. Interacts (via N-terminus) with NR1H2 and NR1H3 in a ligand-independent manner. Interacts with CSNK2A1. Interacts (via N-terminus) with p53/TP53. Interacts (via N-terminus) with BRCA1 (via the BRCT domains). Interacts (via N-terminus) with CHEK2 (via protein kinase domain). Interacts with PSEM3. Interacts (via N-terminus) with PSIA3 and SENP1. The sumoylated form shows a preferential interaction with SIRT1 as compared to its unmodified form. Interacts with CECR2; may form part of the CERF-1 and/or CEF-5 ISWI chromatin remodeling complexes in embryonic stem cells. ATM/ATR-mediated phosphorylation at Thr-454 upon DNA damage promotes binding to SIRT1. Phosphorylation at Thr-454 promotes its sumoylation by switching the binding partner of CCAR2 from SENP1 to PIAS3. Post-translationally, acetylation at Lys-112 and Lys-215 by KAT8 prevents inhibitory binding to SIRT1 and increases its deacetylase activity. In terms of processing, genotoxic stress induces its sumoylation and sumoylation promotes the SIRT1-CCAR2 interaction which in turn inhibits SIRT1-mediated deacetylation of p53/TP53. Sumoylation leads to transcriptional activation of p53/TP53 by sequestering SIRT1 from p53/TP53. Desumoylated by SENP1.

It is found in the nucleus. The protein localises to the cytoplasm. It localises to the cytoskeleton. Its subcellular location is the spindle. Its function is as follows. Core component of the DBIRD complex, a multiprotein complex that acts at the interface between core mRNP particles and RNA polymerase II (RNAPII) and integrates transcript elongation with the regulation of alternative splicing: the DBIRD complex affects local transcript elongation rates and alternative splicing of a large set of exons embedded in (A + T)-rich DNA regions. Inhibits SIRT1 deacetylase activity leading to increasing levels of p53/TP53 acetylation and p53-mediated apoptosis. Inhibits SUV39H1 methyltransferase activity. Mediates ligand-dependent transcriptional activation by nuclear hormone receptors. Plays a critical role in maintaining genomic stability and cellular integrity following UV-induced genotoxic stress. Regulates the circadian expression of the core clock components NR1D1 and BMAL1. Enhances the transcriptional repressor activity of NR1D1 through stabilization of NR1D1 protein levels by preventing its ubiquitination and subsequent degradation. Represses the ligand-dependent transcriptional activation function of ESR2. Acts as a regulator of PCK1 expression and gluconeogenesis by a mechanism that involves, at least in part, both NR1D1 and SIRT1. Negatively regulates the deacetylase activity of HDAC3 and can alter its subcellular localization. Positively regulates the beta-catenin pathway (canonical Wnt signaling pathway) and is required for MCC-mediated repression of the beta-catenin pathway. Represses ligand-dependent transcriptional activation function of NR1H2 and NR1H3 and inhibits the interaction of SIRT1 with NR1H3. Plays an important role in tumor suppression through p53/TP53 regulation; stabilizes p53/TP53 by affecting its interaction with ubiquitin ligase MDM2. Represses the transcriptional activator activity of BRCA1. Inhibits SIRT1 in a CHEK2 and PSEM3-dependent manner and inhibits the activity of CHEK2 in vitro. The protein is Cell cycle and apoptosis regulator protein 2 (CCAR2) of Pongo abelii (Sumatran orangutan).